A 344-amino-acid chain; its full sequence is 4-dimethylallyltryptophan N-methyltransferase easF (344 aa).

It belongs to the methyltransferase superfamily. As to quaternary structure, homodimer.

It catalyses the reaction 4-(3-methylbut-2-enyl)-L-tryptophan + S-adenosyl-L-methionine = 4-(3-methylbut-2-enyl)-L-abrine + S-adenosyl-L-homocysteine + H(+). It functions in the pathway alkaloid biosynthesis; ergot alkaloid biosynthesis. Functionally, 4-dimethylallyltryptophan N-methyltransferase; part of the gene cluster that mediates the biosynthesis of fungal ergot alkaloid ergovaline, the predominant ergopeptine product in E.festucae var. lolii. DmaW catalyzes the first step of ergot alkaloid biosynthesis by condensing dimethylallyl diphosphate (DMAP) and tryptophan to form 4-dimethylallyl-L-tryptophan. The second step is catalyzed by the methyltransferase easF that methylates 4-dimethylallyl-L-tryptophan in the presence of S-adenosyl-L-methionine, resulting in the formation of 4-dimethylallyl-L-abrine. The catalase easC and the FAD-dependent oxidoreductase easE then transform 4-dimethylallyl-L-abrine to chanoclavine-I which is further oxidized by easD in the presence of NAD(+), resulting in the formation of chanoclavine-I aldehyde. Agroclavine dehydrogenase easG then mediates the conversion of chanoclavine-I aldehyde to agroclavine via a non-enzymatic adduct reaction: the substrate is an iminium intermediate that is formed spontaneously from chanoclavine-I aldehyde in the presence of glutathione. The presence of easA is not required to complete this reaction. Further conversion of agroclavine to paspalic acid is a two-step process involving oxidation of agroclavine to elymoclavine and of elymoclavine to paspalic acid, the second step being performed by the elymoclavine oxidase cloA. Paspalic acid is then further converted to D-lysergic acid. Ergovaline is assembled from D-lysergic acid and three different amino acids by the D-lysergyl-peptide-synthetase composed of a monomudular (lpsB) and a trimodular (lpsA) nonribosomal peptide synthetase subunit. This Epichloe festucae var. lolii (Neotyphodium lolii) protein is 4-dimethylallyltryptophan N-methyltransferase easF.